Here is a 21-residue protein sequence, read N- to C-terminus: Ferredoxin (21 aa).

Residues 2 to 21 (KVKVDADACIGCGVCVELCP) form the 4Fe-4S ferredoxin-type domain. [4Fe-4S] cluster is bound by residues C10, C13, and C16.

As to quaternary structure, monomer. Requires [4Fe-4S] cluster as cofactor.

Functionally, ferredoxins are iron-sulfur proteins that transfer electrons in a wide variety of metabolic reactions. The chain is Ferredoxin (fdxA) from Pyrococcus woesei.